The following is a 25-amino-acid chain: GLFSVLGAVAKHVLPHVVPVIAEKL.

Leucine 25 bears the Leucine amide mark.

This sequence belongs to the frog skin active peptide (FSAP) family. Caerin subfamily. Expressed by the skin dorsal glands.

The protein localises to the secreted. In terms of biological role, antimicrobial peptide. Adopts an alpha helical conformation which can disrupt bacterial membranes. Strongly inhibits the formation of NO by neuronal nitric oxide synthase (nNOS) at micromolar concentrations. Acts by a non-competitive mechanism, probably by binding to calcium/calmodulin and as a consequence blocking calmodulin attachment to nNOS. Its function is as follows. Does not show antimicrobial activity. This Ranoidea chloris (Red-eyed tree frog) protein is Caerin-1.6.